The chain runs to 533 residues: Thromboxane-A synthase (533 aa).

Residues 1-10 (MEVLGLLKFE) lie on the Cytoplasmic side of the membrane. A helical transmembrane segment spans residues 11 to 31 (VSGTIVTVTLLVALLALLKWY). The Lumenal portion of the chain corresponds to 32-75 (SMSAFSRLEKLGIRHPKPSPFVGNLMFFRQGFWESQLELRERYG). The chain crosses the membrane as a helical span at residues 76–96 (PLCGYYLGRRMHVVISEPDMI). Residues 97 to 223 (KQVLVENFSN…RRASTFCIPR (127 aa)) are Cytoplasmic-facing. The chain crosses the membrane as a helical span at residues 224–244 (PLLVLILSFPSIMVPLARILP). The Lumenal portion of the chain corresponds to 245-335 (NKNRDELNGF…FTVDEIVGQA (91 aa)). The chain crosses the membrane as a helical span at residues 336–356 (FLFLIAGHEVITNTLSFITYL). Topologically, residues 357–533 (LATHPDCQER…NGVYIKIVSR (177 aa)) are cytoplasmic. Residue C479 coordinates heme.

This sequence belongs to the cytochrome P450 family. As to quaternary structure, monomer. The cofactor is heme. Expressed primarily in lung, kidney, and spleen.

Its subcellular location is the endoplasmic reticulum membrane. It catalyses the reaction prostaglandin H2 = thromboxane A2. The enzyme catalyses prostaglandin H2 = (12S)-hydroxy-(5Z,8E,10E)-heptadecatrienoate + malonaldehyde. The catalysed reaction is a hydroperoxyeicosatetraenoate = an oxoeicosatetraenoate + H2O. It carries out the reaction (15S)-hydroperoxy-(5Z,8Z,11Z,13E)-eicosatetraenoate = 15-oxo-(5Z,8Z,11Z,13E)-eicosatetraenoate + H2O. It catalyses the reaction (15S)-hydroperoxy-(5Z,8Z,11Z,13E)-eicosatetraenoate + AH2 = (15S)-hydroxy-(5Z,8Z,11Z,13E)-eicosatetraenoate + A + H2O. Catalyzes the conversion of prostaglandin H2 (PGH2) to thromboxane A2 (TXA2), a potent inducer of blood vessel constriction and platelet aggregation. Also cleaves PGH2 to 12-hydroxy-heptadecatrienoicacid (12-HHT) and malondialdehyde, which is known to act as a mediator of DNA damage. 12-HHT and malondialdehyde are formed stoichiometrically in the same amounts as TXA2. Additionally, displays dehydratase activity, toward (15S)-hydroperoxy-(5Z,8Z,11Z,13E)-eicosatetraenoate (15(S)-HPETE) producing 15-KETE and 15-HETE. The sequence is that of Thromboxane-A synthase (Tbxas1) from Mus musculus (Mouse).